Reading from the N-terminus, the 169-residue chain is Sorting nexin-24 (169 aa).

An N-acetylmethionine modification is found at methionine 1. The PX domain maps to 1 to 125; the sequence is MEVYIPSFRH…SFDETESEES (125 aa). Arginine 38, serine 40, lysine 61, and arginine 74 together coordinate a 1,2-diacyl-sn-glycero-3-phospho-(1D-myo-inositol-3-phosphate). Serine 113 and serine 116 each carry phosphoserine.

Belongs to the sorting nexin family.

It is found in the cytoplasmic vesicle membrane. Its function is as follows. May be involved in several stages of intracellular trafficking. This is Sorting nexin-24 (Snx24) from Rattus norvegicus (Rat).